A 104-amino-acid polypeptide reads, in one-letter code: Iron-sulfur cluster assembly protein CyaY (104 aa).

Belongs to the frataxin family.

Involved in iron-sulfur (Fe-S) cluster assembly. May act as a regulator of Fe-S biogenesis. The polypeptide is Iron-sulfur cluster assembly protein CyaY (Vibrio vulnificus (strain CMCP6)).